The chain runs to 192 residues: Thymidine kinase (192 aa).

Residues 9–16 and 87–90 contribute to the ATP site; these read ASMNAGKS and DEAQ. The active-site Proton acceptor is the E88. Positions 145, 147, 182, and 185 each coordinate Zn(2+).

Belongs to the thymidine kinase family. Homotetramer.

It localises to the cytoplasm. The catalysed reaction is thymidine + ATP = dTMP + ADP + H(+). The chain is Thymidine kinase from Novosphingobium aromaticivorans (strain ATCC 700278 / DSM 12444 / CCUG 56034 / CIP 105152 / NBRC 16084 / F199).